Reading from the N-terminus, the 388-residue chain is GTPase Obg (388 aa).

Residues 4 to 162 (SNFVDYVKIY…MTVIMELKLL (159 aa)) enclose the Obg domain. Residues 163–329 (ADVGLVGFPN…LKDILWEELN (167 aa)) form the OBG-type G domain. Residues 169 to 176 (GFPNAGKS), 194 to 198 (FTTLE), 216 to 219 (DIPG), 283 to 286 (TKSD), and 310 to 312 (SSV) each bind GTP. Residues serine 176 and threonine 196 each contribute to the Mg(2+) site. The tract at residues 352–388 (LKDMGEDEELDYEYEEDADDEDDDLDYEYEEEDWEEK) is disordered. Acidic residues predominate over residues 356–388 (GEDEELDYEYEEDADDEDDDLDYEYEEEDWEEK).

The protein belongs to the TRAFAC class OBG-HflX-like GTPase superfamily. OBG GTPase family. Monomer. The cofactor is Mg(2+).

The protein resides in the cytoplasm. Its function is as follows. An essential GTPase which binds GTP, GDP and possibly (p)ppGpp with moderate affinity, with high nucleotide exchange rates and a fairly low GTP hydrolysis rate. Plays a role in control of the cell cycle, stress response, ribosome biogenesis and in those bacteria that undergo differentiation, in morphogenesis control. This is GTPase Obg from Bacteroides thetaiotaomicron (strain ATCC 29148 / DSM 2079 / JCM 5827 / CCUG 10774 / NCTC 10582 / VPI-5482 / E50).